Here is a 262-residue protein sequence, read N- to C-terminus: Small ribosomal subunit protein uS2 (262 aa).

Belongs to the universal ribosomal protein uS2 family.

This chain is Small ribosomal subunit protein uS2, found in Borreliella burgdorferi (strain ZS7) (Borrelia burgdorferi).